The chain runs to 288 residues: Syntaxin-1A (288 aa).

Residues 1 to 13 (MKDRTQELRTAKD) are compositionally biased toward basic and acidic residues. Residues 1 to 20 (MKDRTQELRTAKDSDDDDDV) form a disordered region. Topologically, residues 1-265 (MKDRTQELRT…KYQSKARRKK (265 aa)) are cytoplasmic. 3 positions are modified to phosphoserine: S14, S64, and S95. A coiled-coil region spans residues 68–109 (DEKTKEELEELMSDIKKTANKVRSKLKSIEQSIEQEEGLNRS). S188 carries the post-translational modification Phosphoserine; by DAPK1. Residues 192-254 (LSEIETRHSE…ERAVSDTKKA (63 aa)) form the t-SNARE coiled-coil homology domain. Residues K252, K253, and K256 each participate in a glycyl lysine isopeptide (Lys-Gly) (interchain with G-Cter in SUMO) cross-link. The chain crosses the membrane as a helical; Anchor for type IV membrane protein span at residues 266 to 288 (IMIVICCVVLGIVIASTFGGIFG).

This sequence belongs to the syntaxin family. As to quaternary structure, part of the SNARE core complex containing SNAP25, VAMP2 and STX1A; this complex constitutes the basic catalytic machinery of the complex neurotransmitter release apparatus. The SNARE complex interacts with CPLX1. Interacts with STXBP1. The interaction with STXBP1 promotes assembly of the SNARE complex. Interacts (via C-terminus) with KCNB1 (via C-terminus); the interaction increases in a calcium-dependent manner and induces a pore-independent enhancement of exocytosis in neuroendocrine cells, chromaffin cells, pancreatic beta cells and from the soma of dorsal root ganglia (DRG) neurons. Interacts with SYTL4. Interacts with STXBP6. Interacts with PLCL1 (via C2 domain). Interacts with OTOF. Interacts with LGI3. Interacts (via the H3 domain) with SLC6A4 (via the N-terminus); this interaction regulates SLC4A6 channel conductance in thalamocortical neurons. Interacts with SYT6 and SYT8; the interaction is Ca(2+)-dependent. Interacts with VAMP8. Interacts with SNAP23. Interacts with VAPA and SYBU. Interacts with PRRT2. Interacts with SEPT8. Interacts with STXBP5L. Interacts with synaptotagmin-1/SYT1. Interacts with SEPTIN5; in the cerebellar cortex. Interacts with SEPTIN4; in the striatum. In terms of processing, phosphorylated by CK2. Phosphorylation at Ser-188 by DAPK1 significantly decreases its interaction with STXBP1. Sumoylated, sumoylation is required for regulation of synaptic vesicle endocytosis. Post-translationally, (Microbial infection) Targeted and hydrolyzed by C.botulinum neurotoxin type C (BoNT/C) which inhibits neurotransmitter release. Probably hydrolyzes the 253-Lys-|-Ala-254 bond.

The protein resides in the cytoplasmic vesicle. The protein localises to the secretory vesicle. Its subcellular location is the synaptic vesicle membrane. It is found in the synapse. It localises to the synaptosome. The protein resides in the cell membrane. Plays an essential role in hormone and neurotransmitter calcium-dependent exocytosis and endocytosis. Part of the SNARE (Soluble NSF Attachment Receptor) complex composed of SNAP25, STX1A and VAMP2 which mediates the fusion of synaptic vesicles with the presynaptic plasma membrane. STX1A and SNAP25 are localized on the plasma membrane while VAMP2 resides in synaptic vesicles. The pairing of the three SNAREs from the N-terminal SNARE motifs to the C-terminal anchors leads to the formation of the SNARE complex, which brings membranes into close proximity and results in final fusion. Participates in the calcium-dependent regulation of acrosomal exocytosis in sperm. Also plays an important role in the exocytosis of hormones such as insulin or glucagon-like peptide 1 (GLP-1). The protein is Syntaxin-1A (STX1A) of Bos taurus (Bovine).